Reading from the N-terminus, the 653-residue chain is Sodium-dependent phosphate transporter 2 (653 aa).

Topologically, residues 1–5 (MVLDE) are extracellular. Residues 6 to 26 (YMWMVIVGFIIAFVLAFSVGA) form a helical membrane-spanning segment. Over 27 to 46 (NDVANSFGTAVGSGVVTLRQ) the chain is Cytoplasmic. A helical membrane pass occupies residues 47-67 (ACILASIFETIGSVLLGAKVG). The Extracellular segment spans residues 68–86 (ETIRKGIIDVNLYNNTVDL). A glycan (N-linked (GlcNAc...) asparagine) is linked at N81. A helical transmembrane segment spans residues 87–107 (LMAGEVSAMVGSAVWQLIASF). The Cytoplasmic portion of the chain corresponds to 108–109 (LK). Residues 110–130 (LPVSGTHCIVGATIGFSLVAV) form a helical membrane-spanning segment. The Extracellular segment spans residues 131–142 (GAHSVQWMQLVK). A helical transmembrane segment spans residues 143 to 163 (IVASWFISPLLSGLMSGALFL). Topologically, residues 164 to 187 (MIKFFILNKEDPVPNGLKALPVFY) are cytoplasmic. Residues 188–208 (AATIGINVFSILFTGAPLLGL) form a helical membrane-spanning segment. The Extracellular portion of the chain corresponds to 209–217 (QTFPVWATA). A helical membrane pass occupies residues 218–238 (LLSVGIAIVFALVVWFFVCPW). Residues 239 to 483 (MKKKIASRLK…EDKEEKDKSQ (245 aa)) lie on the Cytoplasmic side of the membrane. A disordered region spans residues 275-310 (LPGAKGNDESVLPLTSSSPDAAVSSESVSNGNTRVP). Residues 290 to 303 (SSSPDAAVSSESVS) are compositionally biased toward low complexity. The chain crosses the membrane as a helical span at residues 484 to 504 (VHLLFHFLQILTACFGSFAHG). Residues 505–532 (GNDVSNAIGPLVALWLIYQQGGVMQEAS) are Extracellular-facing. Residues 533 to 553 (TPVWLLLYGGVGICAGLWVWG) traverse the membrane as a helical segment. Residues 554 to 572 (RRVIQTMGKDLTPITPSSG) are Cytoplasmic-facing. The helical transmembrane segment at 573 to 587 (FTIELASAFTVVVAS) threads the bilayer. Topologically, residues 588–594 (NIGLPIS) are extracellular. The chain crosses the membrane as a helical span at residues 595-610 (TTHCKVGSVVAVGWIR). Topologically, residues 611-622 (SRKAVDWRLFRN) are cytoplasmic. A helical transmembrane segment spans residues 623 to 643 (IFLAWFVTVPVAGLFSAGVMA). The Extracellular segment spans residues 644 to 653 (ILQYGILPYV).

It belongs to the inorganic phosphate transporter (PiT) (TC 2.A.20) family. In terms of assembly, homodimer.

The protein localises to the cell membrane. Its subcellular location is the apical cell membrane. The catalysed reaction is 2 Na(+)(out) + phosphate(out) = 2 Na(+)(in) + phosphate(in). Its function is as follows. Sodium-phosphate symporter which preferentially transports the monovalent form of phosphate with a stoichiometry of two sodium ions per phosphate ion. The protein is Sodium-dependent phosphate transporter 2 (slc20a2) of Xenopus laevis (African clawed frog).